A 342-amino-acid chain; its full sequence is Dihydroorotate dehydrogenase (quinone) (342 aa).

Residues 60 to 64 (AGFDK) and Thr-84 contribute to the FMN site. Lys-64 contacts substrate. Position 109–113 (109–113 (NRMGF)) interacts with substrate. 2 residues coordinate FMN: Asn-137 and Asn-170. Asn-170 is a substrate binding site. Residue Ser-173 is the Nucleophile of the active site. Asn-175 lines the substrate pocket. The FMN site is built by Lys-215 and Thr-243. Residue 244–245 (NT) participates in substrate binding. FMN is bound by residues Gly-266, Gly-295, and 316–317 (YT).

It belongs to the dihydroorotate dehydrogenase family. Type 2 subfamily. As to quaternary structure, monomer. Requires FMN as cofactor.

Its subcellular location is the cell membrane. It catalyses the reaction (S)-dihydroorotate + a quinone = orotate + a quinol. It participates in pyrimidine metabolism; UMP biosynthesis via de novo pathway; orotate from (S)-dihydroorotate (quinone route): step 1/1. Its function is as follows. Catalyzes the conversion of dihydroorotate to orotate with quinone as electron acceptor. This chain is Dihydroorotate dehydrogenase (quinone), found in Halorhodospira halophila (strain DSM 244 / SL1) (Ectothiorhodospira halophila (strain DSM 244 / SL1)).